Here is a 210-residue protein sequence, read N- to C-terminus: ATP-dependent Clp protease proteolytic subunit (210 aa).

S106 (nucleophile) is an active-site residue. H131 is an active-site residue.

This sequence belongs to the peptidase S14 family. Fourteen ClpP subunits assemble into 2 heptameric rings which stack back to back to give a disk-like structure with a central cavity, resembling the structure of eukaryotic proteasomes.

The protein localises to the cytoplasm. It carries out the reaction Hydrolysis of proteins to small peptides in the presence of ATP and magnesium. alpha-casein is the usual test substrate. In the absence of ATP, only oligopeptides shorter than five residues are hydrolyzed (such as succinyl-Leu-Tyr-|-NHMec, and Leu-Tyr-Leu-|-Tyr-Trp, in which cleavage of the -Tyr-|-Leu- and -Tyr-|-Trp bonds also occurs).. In terms of biological role, cleaves peptides in various proteins in a process that requires ATP hydrolysis. Has a chymotrypsin-like activity. Plays a major role in the degradation of misfolded proteins. The sequence is that of ATP-dependent Clp protease proteolytic subunit from Azospirillum brasilense.